The sequence spans 537 residues: MIETGLRNSSQGIETFGLRNLAGVHWNLTEPQLYEHAIAKGEARLAAGGALAANTGVHTGRSPKDKFVVRDATTEGEVWWDNNGSITPEQFETLYQDFLAAAEGKTLFAQDLYGGADPAHRIAARVYTEYAWHSLFIRTMLRRPAREELPGYVPELTIIDLPSFKADPARHGVRSDTIIAVNFTRRIVLIGSSSYAGEMKKSVFTFLNYLLPAKGVMPMHCSANAGKDGDVALFFGLSGTGKTTLSADPARTLLGDDEHGWSNTGVFNFEGGCYAKTIRLSKEAEPEIFAASDRFGTILENVILHEDTRVPDFDDGSLTENTRSAYPLDFIPNASPTGRAGVPKNIIMLTADAFGVMPPIARLTPAQAMYHFLSGYTAKVAGTEKGVKDPEATFSTCFGAPFMPRHPSVYGNLLRDLIAKYQVDCWLVNTGWTGGKYGVGRRMPIKVTRTLLTAALDGSLKDAAFRTDPYFGFSVPSSVPGIEPHILYPSKTWADKADFDATARKLVAMFRDNFAKFEGHVDAAVRDAQPQVRIAAE.

Positions 61, 195, and 201 each coordinate substrate. Residues Lys-201, His-220, and 236–244 (GLSGTGKTT) contribute to the ATP site. The Mn(2+) site is built by Lys-201 and His-220. Asp-257 serves as a coordination point for Mn(2+). ATP-binding residues include Glu-285, Arg-323, and Thr-448. Substrate is bound at residue Arg-323.

This sequence belongs to the phosphoenolpyruvate carboxykinase (ATP) family. Mn(2+) is required as a cofactor.

It localises to the cytoplasm. The enzyme catalyses oxaloacetate + ATP = phosphoenolpyruvate + ADP + CO2. It participates in carbohydrate biosynthesis; gluconeogenesis. Involved in the gluconeogenesis. Catalyzes the conversion of oxaloacetate (OAA) to phosphoenolpyruvate (PEP) through direct phosphoryl transfer between the nucleoside triphosphate and OAA. In Azorhizobium caulinodans (strain ATCC 43989 / DSM 5975 / JCM 20966 / LMG 6465 / NBRC 14845 / NCIMB 13405 / ORS 571), this protein is Phosphoenolpyruvate carboxykinase (ATP).